The following is a 224-amino-acid chain: Methylamine utilization ferredoxin-type protein MauM (224 aa).

The N-terminal stretch at 1-41 (MEARMTGRRKVTRRDAMADAARAVGVACLGGFSLAALVRTA) is a signal peptide. 4Fe-4S ferredoxin-type domains are found at residues 54 to 84 (ALPE…LAEW), 91 to 124 (GTPF…RDIP), 133 to 169 (VAVL…LEPQ), and 177 to 208 (MIPV…VLPR). Residues Cys64, Cys67, Cys70, Cys74, Cys102, Cys105, Cys110, Cys114, Cys142, Cys150, Cys153, Cys157, Cys186, Cys189, Cys192, and Cys196 each contribute to the [4Fe-4S] cluster site.

It participates in one-carbon metabolism; methylamine degradation. Functionally, involved in electron transfer. The chain is Methylamine utilization ferredoxin-type protein MauM (mauM) from Paracoccus denitrificans (strain Pd 1222).